The chain runs to 179 residues: Interleukin-10 (179 aa).

Residues 1 to 19 form the signal peptide; that stretch reads MPSPALLCCCLVLLAGVGA. Cystine bridges form between Cys-31–Cys-127 and Cys-81–Cys-133. Asn-135 is a glycosylation site (N-linked (GlcNAc...) asparagine).

This sequence belongs to the IL-10 family. As to quaternary structure, homodimer. Interacts with IL10RA and IL10RB.

It localises to the secreted. In terms of biological role, major immune regulatory cytokine that acts on many cells of the immune system where it has profound anti-inflammatory functions, limiting excessive tissue disruption caused by inflammation. Mechanistically, IL10 binds to its heterotetrameric receptor comprising IL10RA and IL10RB leading to JAK1 and STAT2-mediated phosphorylation of STAT3. In turn, STAT3 translocates to the nucleus where it drives expression of anti-inflammatory mediators. Targets antigen-presenting cells (APCs) such as macrophages and monocytes and inhibits their release of pro-inflammatory cytokines including granulocyte-macrophage colony-stimulating factor /GM-CSF, granulocyte colony-stimulating factor/G-CSF, IL-1 alpha, IL-1 beta, IL-6, IL-8 and TNF-alpha. Also interferes with antigen presentation by reducing the expression of MHC-class II and co-stimulatory molecules, thereby inhibiting their ability to induce T cell activation. In addition, controls the inflammatory response of macrophages by reprogramming essential metabolic pathways including mTOR signaling. The polypeptide is Interleukin-10 (IL10) (Vulpes vulpes (Red fox)).